A 52-amino-acid polypeptide reads, in one-letter code: Transcriptional regulator SlrA (52 aa).

Positions 1–38 (MKTHVKKDLDKGWHMLIQEARSIGLGIHDVRQFLESET) constitute a Sin domain.

Component of the SlrR/SlrA complex.

Its function is as follows. Required specifically for induction of eps and yqxM operons by antagonizing SinR. Regulates SlrR activity. Controls the initiation of biofilm formation. This chain is Transcriptional regulator SlrA (slrA), found in Bacillus subtilis (strain 168).